A 341-amino-acid polypeptide reads, in one-letter code: N-(sulfonatooxy)alkenimidothioic acid sulfate-lyase (epithionitrile-forming) (341 aa).

A disordered region spans residues 1-24; sequence MAPTLQGQWIKVGQKGGTGPGPRS. 4 Kelch repeats span residues 34–82, 87–133, 139–194, and 203–249; these read KLYS…VRMV, KIYI…FHSM, HVYV…VVQG, and ATSI…AHAV. Lysine 46, arginine 94, threonine 129, phenylalanine 130, arginine 157, glycine 186, lysine 211, and valine 244 together coordinate a (Z)-N-(sulfonatooxy)alkanimidothioate. Arginine 94 (proton donor) is an active-site residue. Arginine 157 functions as the Proton donor in the catalytic mechanism. Fe(2+) contacts are provided by glutamate 260, aspartate 264, and histidine 268. Residue tryptophan 303 coordinates a (Z)-N-(sulfonatooxy)alkanimidothioate.

Homodimer. Interacts with WRKY53. It depends on Fe(2+) as a cofactor. Expressed in epidermal cells of all above-ground organs except the anthers, in cambial cells of leaf and stem vascular bundles, and in glucosinolates rich S-cells found in stems just below the inflorescence. Absent from roots.

The protein localises to the cytoplasm. It is found in the nucleus. The enzyme catalyses a (Z)-N-(sulfonatooxy)alkenimidothioate = an epithionitrile + sulfate. It carries out the reaction a (Z)-N-(sulfonatooxy)alkanimidothioate = a nitrile + sulfur + sulfate. The catalysed reaction is (Z)-(indol-3-yl)-N-(sulfonatooxy)methanimidothioate = (indol-3-yl)acetonitrile + sulfur + sulfate. With respect to regulation, not dependent on the presence of Fe(2+) although supplemental Fe(2+) increases nitriles formation. Specifier protein that contributes to constitutive and herbivore-induced simple nitrile formation. Converts glucosinolates both to epithionitriles and to simple nitriles in the presence of myrosinase. Promotes the formation of epithionitriles after hydrolysis of alkenylglucosinolates containing a terminal double bond. Mediates indol-3-ylacetonitrile (IACN) production from indol-3-ylmethylglucosinolate (glucobrassicin). Triggers the production of 3,4-epithiobutylnitrile from 2-propenylisothiocyanate, product of 2-propenylglucosinolate (sinigrin) catalysis by myrosinase. Seems inactive toward benzylglucosinolate (glucotropaeolin). Acts as a negative regulator of senescence. This Arabidopsis thaliana (Mouse-ear cress) protein is N-(sulfonatooxy)alkenimidothioic acid sulfate-lyase (epithionitrile-forming).